A 263-amino-acid chain; its full sequence is Tryptophan synthase alpha chain (263 aa).

Active-site proton acceptor residues include glutamate 49 and aspartate 60.

The protein belongs to the TrpA family. As to quaternary structure, tetramer of two alpha and two beta chains.

The catalysed reaction is (1S,2R)-1-C-(indol-3-yl)glycerol 3-phosphate + L-serine = D-glyceraldehyde 3-phosphate + L-tryptophan + H2O. The protein operates within amino-acid biosynthesis; L-tryptophan biosynthesis; L-tryptophan from chorismate: step 5/5. In terms of biological role, the alpha subunit is responsible for the aldol cleavage of indoleglycerol phosphate to indole and glyceraldehyde 3-phosphate. The protein is Tryptophan synthase alpha chain of Cereibacter sphaeroides (strain ATCC 17029 / ATH 2.4.9) (Rhodobacter sphaeroides).